The primary structure comprises 344 residues: Selenide, water dikinase (344 aa).

Residue selenocysteine 16 is part of the active site. Selenocysteine 16 is a non-standard amino acid (selenocysteine). Residues lysine 19 and 46-48 contribute to the ATP site; that span reads TND. Aspartate 49 lines the Mg(2+) pocket. Residues aspartate 66, aspartate 89, and 135–137 contribute to the ATP site; that span reads GHT. Aspartate 89 contacts Mg(2+). Aspartate 223 lines the Mg(2+) pocket.

This sequence belongs to the selenophosphate synthase 1 family. Class I subfamily. As to quaternary structure, homodimer. It depends on Mg(2+) as a cofactor.

It carries out the reaction hydrogenselenide + ATP + H2O = selenophosphate + AMP + phosphate + 2 H(+). Functionally, synthesizes selenophosphate from selenide and ATP. The polypeptide is Selenide, water dikinase (Caldanaerobacter subterraneus subsp. tengcongensis (strain DSM 15242 / JCM 11007 / NBRC 100824 / MB4) (Thermoanaerobacter tengcongensis)).